The primary structure comprises 625 residues: DNA-directed RNA polymerase subunit gamma (625 aa).

The Zn(2+) site is built by Cys71, Cys73, Cys86, and Cys89. Mg(2+) is bound by residues Asp467, Asp469, and Asp471.

This sequence belongs to the RNA polymerase beta' chain family. RpoC1 subfamily. As to quaternary structure, in cyanobacteria the RNAP catalytic core is composed of 2 alpha, 1 beta, 1 beta', 1 gamma and 1 omega subunit. When a sigma factor is associated with the core the holoenzyme is formed, which can initiate transcription. It depends on Mg(2+) as a cofactor. Zn(2+) serves as cofactor.

It carries out the reaction RNA(n) + a ribonucleoside 5'-triphosphate = RNA(n+1) + diphosphate. Its function is as follows. DNA-dependent RNA polymerase catalyzes the transcription of DNA into RNA using the four ribonucleoside triphosphates as substrates. The polypeptide is DNA-directed RNA polymerase subunit gamma (Gloeothece citriformis (strain PCC 7424) (Cyanothece sp. (strain PCC 7424))).